Consider the following 889-residue polypeptide: MDRFDVPKEIGDITFGLLSPEQIRTMSVAKIVTADTYDDDGYPIDGGLMDTRLGVIDPGLVCKSCSGRVGTCPGHFGHIELSKSVIHIGFAKDIYKLLKAVCPHCGKVTVTEIKRDEYLEKMLKLEEDGGDPWTLSDDLLKEAAKSSVCPSCGEVKYDIKYDKPTTYHQLDGKSQKQLTSSEVREILEKIPNEDCKLLGINSRVARPEYMVLTVLPVPPVTVRPSITLESGERSEDDLTHKLVDIIRINQRLEENINGGAPNLIIEDLWDLLQYHINTYFDNEAPGIPPARHRSGRPLRTLAQRLKGKEGRFRHNLAGKRVNFSARTVISPDPRLSINEVGIPELIAKELTVPEKVTPYNIERIRKLIENGSDKHPGVNYVIKKVKTKDGKEEEYKIKITDTNKKMWVENIVDGMVVERHLGDGDVVLYNRQPSLHRMSIMAHKVKVLPYRTFRHNLCVCPPYNADFDGDEMNVHVPQSEEARAEAETLMLVEKHIISPRYGGPIIGAIHDFVSGAYVLTSSNFIKDEALTLLKSSGFGSELGEPDFVENGIEYYSGKSLFSKTLPKGLNLQYKAKVCKKCVQCKREECENDAFVIIRNGRLVQGVIDKNGFGAETGVVLNTIVKDFGSEDARTFLDSATKMSVKSMMLRGFTTGIDDEDIPSEAIQEIQDLLDKAESDVQEIVERYEGGTLDPLPGRGIEESREAYIMQILGKARDDTGKVAEKYLSKENHAALMARTGARGSLLNITMMAASVGQQSVRGGRVFRGYRGRTLPHFGEGSLDAKSHGFVRSCYKKGLAPTEYFFHAMGGREGLVDQAVRTAQSGYMQRRLVNALQDIKAEYDGTVRDSRGIIVQFNYGEDLVDPSKADHGKGVDLDKVFTKVISKYEN.

Cysteine 62, cysteine 65, cysteine 72, histidine 75, cysteine 102, cysteine 105, cysteine 149, and cysteine 152 together coordinate Zn(2+). Positions 466, 468, and 470 each coordinate Mg(2+).

This sequence belongs to the RNA polymerase beta' chain family. Part of the RNA polymerase complex. Requires Mg(2+) as cofactor. Zn(2+) serves as cofactor.

It is found in the cytoplasm. The catalysed reaction is RNA(n) + a ribonucleoside 5'-triphosphate = RNA(n+1) + diphosphate. In terms of biological role, DNA-dependent RNA polymerase (RNAP) catalyzes the transcription of DNA into RNA using the four ribonucleoside triphosphates as substrates. Forms the clamp head domain. This Methanococcus vannielii (strain ATCC 35089 / DSM 1224 / JCM 13029 / OCM 148 / SB) protein is DNA-directed RNA polymerase subunit Rpo1N.